Reading from the N-terminus, the 284-residue chain is L-ribulose-5-phosphate 3-epimerase UlaE (284 aa).

It belongs to the L-ribulose-5-phosphate 3-epimerase family.

It catalyses the reaction L-ribulose 5-phosphate = L-xylulose 5-phosphate. Its pathway is cofactor degradation; L-ascorbate degradation; D-xylulose 5-phosphate from L-ascorbate: step 3/4. Functionally, catalyzes the isomerization of L-xylulose-5-phosphate to L-ribulose-5-phosphate. Is involved in the anaerobic L-ascorbate utilization. The protein is L-ribulose-5-phosphate 3-epimerase UlaE of Salmonella dublin (strain CT_02021853).